Here is a 415-residue protein sequence, read N- to C-terminus: Queuine tRNA-ribosyltransferase accessory subunit 2 (415 aa).

Positions 351, 353, 356, and 382 each coordinate Zn(2+).

It belongs to the queuine tRNA-ribosyltransferase family. QTRT2 subfamily. As to quaternary structure, heterodimer of a catalytic subunit QTRT1 and an accessory subunit QTRT2. Zn(2+) is required as a cofactor.

The protein localises to the cytoplasm. It is found in the mitochondrion outer membrane. Functionally, non-catalytic subunit of the queuine tRNA-ribosyltransferase (TGT) that catalyzes the base-exchange of a guanine (G) residue with queuine (Q) at position 34 (anticodon wobble position) in tRNAs with GU(N) anticodons (tRNA-Asp, -Asn, -His and -Tyr), resulting in the hypermodified nucleoside queuosine (7-(((4,5-cis-dihydroxy-2-cyclopenten-1-yl)amino)methyl)-7-deazaguanosine). This is Queuine tRNA-ribosyltransferase accessory subunit 2 from Homo sapiens (Human).